Reading from the N-terminus, the 348-residue chain is Protein RecA (348 aa).

67-74 contacts ATP; that stretch reads GPESSGKT.

It belongs to the RecA family.

The protein localises to the cytoplasm. Can catalyze the hydrolysis of ATP in the presence of single-stranded DNA, the ATP-dependent uptake of single-stranded DNA by duplex DNA, and the ATP-dependent hybridization of homologous single-stranded DNAs. It interacts with LexA causing its activation and leading to its autocatalytic cleavage. The sequence is that of Protein RecA from Clostridioides difficile (strain 630) (Peptoclostridium difficile).